The sequence spans 217 residues: Vesicle transport through interaction with t-SNAREs homolog 1A (217 aa).

The Cytoplasmic portion of the chain corresponds to 1-192 (MSSDFEGYEQ…GMLRRIIQNR (192 aa)). Coiled coils occupy residues 31–92 (PDEK…KRSR) and 112–178 (ENQR…GKSS). The chain crosses the membrane as a helical span at residues 193–213 (ILLVILGIIVVITILMAITFS). Topologically, residues 214–217 (VRRH) are extracellular.

Belongs to the VTI1 family. As to quaternary structure, interacts with distinct SNARE complexes that contain either STX5 or STX6. Interacts with NAPA and, to a lesser extent, with NAPG. Identified in a complex containing STX6, STX12, VAMP4 and VTI1A.

It is found in the cytoplasmic vesicle. The protein resides in the golgi apparatus membrane. In terms of biological role, V-SNARE that mediates vesicle transport pathways through interactions with t-SNAREs on the target membrane. These interactions are proposed to mediate aspects of the specificity of vesicle trafficking and to promote fusion of the lipid bilayers. Involved in vesicular transport from the late endosomes to the trans-Golgi network. Along with VAMP7, involved in an non-conventional RAB1-dependent traffic route to the cell surface used by KCNIP1 and KCND2. May be involved in increased cytokine secretion associated with cellular senescence. The chain is Vesicle transport through interaction with t-SNAREs homolog 1A (VTI1A) from Homo sapiens (Human).